Consider the following 311-residue polypeptide: tRNA (guanine-N(7)-)-methyltransferase (311 aa).

Residues glutamate 28, glutamate 53, and aspartate 103 each contribute to the S-adenosyl-L-methionine site. Aspartate 103 is an active-site residue. Substrate-binding residues include lysine 107 and aspartate 139.

Belongs to the class I-like SAM-binding methyltransferase superfamily. TrmB family.

It catalyses the reaction guanosine(46) in tRNA + S-adenosyl-L-methionine = N(7)-methylguanosine(46) in tRNA + S-adenosyl-L-homocysteine. It functions in the pathway tRNA modification; N(7)-methylguanine-tRNA biosynthesis. In terms of biological role, catalyzes the formation of N(7)-methylguanine at position 46 (m7G46) in tRNA. This Thermus thermophilus (strain ATCC BAA-163 / DSM 7039 / HB27) protein is tRNA (guanine-N(7)-)-methyltransferase.